Here is a 389-residue protein sequence, read N- to C-terminus: 26S proteasome non-ATPase regulatory subunit 6 (389 aa).

Residues Asp193–Ser361 form the PCI domain.

The protein belongs to the proteasome subunit S10 family. Component of the 19S proteasome regulatory particle complex. The 26S proteasome consists of a 20S core particle (CP) and two 19S regulatory subunits (RP). The regulatory particle is made of a lid composed of 9 subunits including PSMD6, a base containing 6 ATPases and few additional components.

In terms of biological role, component of the 26S proteasome, a multiprotein complex involved in the ATP-dependent degradation of ubiquitinated proteins. This complex plays a key role in the maintenance of protein homeostasis by removing misfolded or damaged proteins, which could impair cellular functions, and by removing proteins whose functions are no longer required. Therefore, the proteasome participates in numerous cellular processes, including cell cycle progression, apoptosis, or DNA damage repair. The chain is 26S proteasome non-ATPase regulatory subunit 6 (Psmd6) from Mus musculus (Mouse).